Here is a 305-residue protein sequence, read N- to C-terminus: Glycine--tRNA ligase alpha subunit (305 aa).

This sequence belongs to the class-II aminoacyl-tRNA synthetase family. In terms of assembly, tetramer of two alpha and two beta subunits.

It localises to the cytoplasm. It catalyses the reaction tRNA(Gly) + glycine + ATP = glycyl-tRNA(Gly) + AMP + diphosphate. The protein is Glycine--tRNA ligase alpha subunit of Streptococcus pyogenes serotype M12 (strain MGAS2096).